Reading from the N-terminus, the 104-residue chain is Pyrimidine/purine nucleoside phosphorylase (104 aa).

Belongs to the nucleoside phosphorylase PpnP family.

It catalyses the reaction a purine D-ribonucleoside + phosphate = a purine nucleobase + alpha-D-ribose 1-phosphate. It carries out the reaction adenosine + phosphate = alpha-D-ribose 1-phosphate + adenine. The enzyme catalyses cytidine + phosphate = cytosine + alpha-D-ribose 1-phosphate. The catalysed reaction is guanosine + phosphate = alpha-D-ribose 1-phosphate + guanine. It catalyses the reaction inosine + phosphate = alpha-D-ribose 1-phosphate + hypoxanthine. It carries out the reaction thymidine + phosphate = 2-deoxy-alpha-D-ribose 1-phosphate + thymine. The enzyme catalyses uridine + phosphate = alpha-D-ribose 1-phosphate + uracil. The catalysed reaction is xanthosine + phosphate = alpha-D-ribose 1-phosphate + xanthine. In terms of biological role, catalyzes the phosphorolysis of diverse nucleosides, yielding D-ribose 1-phosphate and the respective free bases. Can use uridine, adenosine, guanosine, cytidine, thymidine, inosine and xanthosine as substrates. Also catalyzes the reverse reactions. This Janthinobacterium sp. (strain Marseille) (Minibacterium massiliensis) protein is Pyrimidine/purine nucleoside phosphorylase.